The chain runs to 439 residues: UPF0229 protein Nham_0975 (439 aa).

The disordered stretch occupies residues arginine 39 to aspartate 106. Residues serine 58–valine 76 are compositionally biased toward basic and acidic residues.

The protein belongs to the UPF0229 family.

The protein is UPF0229 protein Nham_0975 of Nitrobacter hamburgensis (strain DSM 10229 / NCIMB 13809 / X14).